The primary structure comprises 201 residues: Dephospho-CoA kinase (201 aa).

The region spanning 4–201 (IIGITGGIAS…LEGGRQDDRD (198 aa)) is the DPCK domain. 12 to 17 (ASGKST) serves as a coordination point for ATP.

It belongs to the CoaE family.

It is found in the cytoplasm. It catalyses the reaction 3'-dephospho-CoA + ATP = ADP + CoA + H(+). It participates in cofactor biosynthesis; coenzyme A biosynthesis; CoA from (R)-pantothenate: step 5/5. In terms of biological role, catalyzes the phosphorylation of the 3'-hydroxyl group of dephosphocoenzyme A to form coenzyme A. In Streptococcus pneumoniae serotype 4 (strain ATCC BAA-334 / TIGR4), this protein is Dephospho-CoA kinase.